The chain runs to 238 residues: uncharacterized protein (238 aa).

The protein belongs to the chlamydial CPn_0658/CT_538/TC_0825 family.

This is an uncharacterized protein from Chlamydia trachomatis serovar D (strain ATCC VR-885 / DSM 19411 / UW-3/Cx).